The primary structure comprises 246 residues: 3'(2'),5'-bisphosphate nucleotidase CysQ (246 aa).

Mg(2+) contacts are provided by glutamate 64, aspartate 83, leucine 85, aspartate 86, and aspartate 205. Glutamate 64 is a binding site for substrate. Substrate contacts are provided by residues 85-88 (LDGT) and aspartate 205.

The protein belongs to the inositol monophosphatase superfamily. CysQ family. It depends on Mg(2+) as a cofactor.

The protein localises to the cell inner membrane. The enzyme catalyses adenosine 3',5'-bisphosphate + H2O = AMP + phosphate. Functionally, converts adenosine-3',5'-bisphosphate (PAP) to AMP. This chain is 3'(2'),5'-bisphosphate nucleotidase CysQ, found in Shigella flexneri.